The chain runs to 337 residues: Quercetin 2,3-dioxygenase (337 aa).

2 Cupin type-2 domains span residues 55–110 (KGDA…MQSH) and 226–281 (PKGD…RLDS). Fe cation contacts are provided by His-62, His-64, Glu-69, His-103, His-234, His-236, Glu-241, and His-275.

Homodimer. Requires Fe(2+) as cofactor.

The catalysed reaction is quercetin + O2 = 2-(3,4-dihydroxybenzoyloxy)-4,6-dihydroxybenzoate + CO. It functions in the pathway flavonoid metabolism; quercetin degradation. Functionally, performs the first step in the degradation of the flavonoid quercetin by a dioxygenase reaction. The enzyme catalyzes the cleavage of the O-heteroaromatic ring of the flavonol quercetin yielding the depside 2-protocatechuoyl-phloroglucinol carboxylic acid and carbon monoxide. This involves the remarkable dioxygenolytic cleavage of two carbon-carbon bonds. This is Quercetin 2,3-dioxygenase (qdoI) from Bacillus subtilis (strain 168).